The sequence spans 1211 residues: DNA-directed RNA polymerase subunit beta' (1211 aa).

Cys60, Cys62, Cys75, and Cys78 together coordinate Zn(2+). Asp450, Asp452, and Asp454 together coordinate Mg(2+). Zn(2+)-binding residues include Cys819, Cys893, Cys900, and Cys903.

Belongs to the RNA polymerase beta' chain family. As to quaternary structure, the RNAP catalytic core consists of 2 alpha, 1 beta, 1 beta' and 1 omega subunit. When a sigma factor is associated with the core the holoenzyme is formed, which can initiate transcription. Requires Mg(2+) as cofactor. The cofactor is Zn(2+).

It catalyses the reaction RNA(n) + a ribonucleoside 5'-triphosphate = RNA(n+1) + diphosphate. Its function is as follows. DNA-dependent RNA polymerase catalyzes the transcription of DNA into RNA using the four ribonucleoside triphosphates as substrates. This Streptococcus equi subsp. zooepidemicus (strain H70) protein is DNA-directed RNA polymerase subunit beta'.